Consider the following 402-residue polypeptide: Succinyl-CoA--D-citramalate CoA-transferase (402 aa).

Catalysis depends on aspartate 174, which acts as the Nucleophile.

It belongs to the CoA-transferase III family. As to quaternary structure, homodimer.

It catalyses the reaction (3R)-citramalate + succinyl-CoA = (3R)-citramalyl-CoA + succinate. It carries out the reaction (R)-malate + succinyl-CoA = (R)-malyl-CoA + succinate. Involved in the 3-hydroxypropionate cycle used for autotrophic carbon dioxide fixation, and in the glyoxylate assimilation cycle used to regenerate acetyl-CoA and produce pyruvate as universal precursor for biosynthesis. Catalyzes the transfer of CoA moiety from succinyl-CoA to D-citramalate to yield citramalyl-CoA. This Chloroflexus aurantiacus (strain ATCC 29366 / DSM 635 / J-10-fl) protein is Succinyl-CoA--D-citramalate CoA-transferase.